The primary structure comprises 196 residues: Pyridoxal 5'-phosphate synthase subunit PdxT (196 aa).

Residue 47–49 (GES) participates in L-glutamine binding. The Nucleophile role is filled by C79. Residues R106 and 134 to 135 (IR) contribute to the L-glutamine site. Active-site charge relay system residues include H170 and E172.

The protein belongs to the glutaminase PdxT/SNO family. In the presence of PdxS, forms a dodecamer of heterodimers. Only shows activity in the heterodimer.

The catalysed reaction is aldehydo-D-ribose 5-phosphate + D-glyceraldehyde 3-phosphate + L-glutamine = pyridoxal 5'-phosphate + L-glutamate + phosphate + 3 H2O + H(+). The enzyme catalyses L-glutamine + H2O = L-glutamate + NH4(+). It functions in the pathway cofactor biosynthesis; pyridoxal 5'-phosphate biosynthesis. Functionally, catalyzes the hydrolysis of glutamine to glutamate and ammonia as part of the biosynthesis of pyridoxal 5'-phosphate. The resulting ammonia molecule is channeled to the active site of PdxS. The sequence is that of Pyridoxal 5'-phosphate synthase subunit PdxT from Bacillus cereus (strain B4264).